A 435-amino-acid polypeptide reads, in one-letter code: Serine/threonine-protein kinase 40 (435 aa).

In terms of domain architecture, Protein kinase spans 35 to 332 (FVLGPRLGNS…DVLEALSAII (298 aa)). Residues 41–49 (LGNSPVPSI) and K66 each bind ATP. Residue D197 is the Proton acceptor of the active site.

Belongs to the protein kinase superfamily. CAMK Ser/Thr protein kinase family.

It is found in the nucleus. The protein localises to the cytoplasm. It catalyses the reaction L-seryl-[protein] + ATP = O-phospho-L-seryl-[protein] + ADP + H(+). It carries out the reaction L-threonyl-[protein] + ATP = O-phospho-L-threonyl-[protein] + ADP + H(+). In terms of biological role, may be a negative regulator of NF-kappa-B and p53-mediated gene transcription. The polypeptide is Serine/threonine-protein kinase 40 (Stk40) (Mus musculus (Mouse)).